The primary structure comprises 310 residues: Ribosome production factor 2 homolog (310 aa).

The Brix domain maps to 29–239 (KKTLILHGTK…VRRHRYPVES (211 aa)). Residues 281 to 310 (LSNDVKGLKRERREAKKNKDHSKKQKINPE) form a disordered region. The segment covering 295 to 310 (AKKNKDHSKKQKINPE) has biased composition (basic residues).

This sequence belongs to the RPF2 family.

The protein localises to the nucleus. It is found in the nucleolus. This chain is Ribosome production factor 2 homolog, found in Oryza sativa subsp. japonica (Rice).